A 148-amino-acid chain; its full sequence is Receptor activity-modifying protein 1 (148 aa).

The N-terminal stretch at 1 to 26 (MARGLRGLPRRGLWLLLVNHLFLATA) is a signal peptide. Intrachain disulfides connect Cys27–Cys82, Cys40–Cys72, and Cys57–Cys104. Topologically, residues 27–118 (CQDTDHAALL…RALQDPPSSV (92 aa)) are extracellular. A helical transmembrane segment spans residues 119 to 140 (LCPFIVVPILATLLMTALVVWR). Residues 141–148 (SKRPEGIV) are Cytoplasmic-facing.

This sequence belongs to the RAMP family. In terms of assembly, heterodimer of CALCRL and RAMP1; the interaction induces allosteric modulation of CALCRL function and CGRP1/CALCA and CGRP2/CALCB ligand specificity. Heterodimer of CALCR and RAMP1; interaction forms the AMYR1 receptor complex for amylin/IAPP and CGRP1/CALCA ligands.

Its subcellular location is the cell membrane. Functionally, accessory protein that interacts with and modulates the function of G-protein coupled receptors including calcitonin gene-related peptide type 1 receptor (CALCRL) and calcitonin receptor (CALCR). Required for the transport of CALCRL to the plasma membrane. Together with CALCRL, form the receptor complex for the calcitonin gene-related peptides CGRP1/CALCA and CGRP2/CALCB. Together with CALCR, form the AMYR1 receptor complex for amylin/IAPP and CGRP1/CALCA. The chain is Receptor activity-modifying protein 1 (RAMP1) from Sus scrofa (Pig).